The chain runs to 271 residues: uncharacterized protein (271 aa).

The signal sequence occupies residues 1–22 (MIHSKRLKLCLCLIILSVFIGA). C23 is lipidated: N-palmitoyl cysteine. C23 carries S-diacylglycerol cysteine lipidation.

This sequence belongs to the staphylococcal tandem lipoprotein family.

The protein localises to the cell membrane. This is an uncharacterized protein from Staphylococcus aureus (strain MW2).